The chain runs to 111 residues: Translation initiation factor 1A (111 aa).

The span at 1–13 shows a compositional bias: basic residues; sequence MKKSNNKNNHKNN. Residues 1-30 are disordered; it reads MKKSNNKNNHKNNHNNNQGGENIRVRSPRR. An S1-like domain is found at 23 to 96; the sequence is IRVRSPRRGE…EKADVIWRYT (74 aa).

The protein belongs to the eIF-1A family.

Functionally, seems to be required for maximal rate of protein biosynthesis. Enhances ribosome dissociation into subunits and stabilizes the binding of the initiator Met-tRNA(I) to 40 S ribosomal subunits. This is Translation initiation factor 1A from Methanosphaera stadtmanae (strain ATCC 43021 / DSM 3091 / JCM 11832 / MCB-3).